The chain runs to 235 residues: Small heat shock protein, chloroplastic (235 aa).

Disordered regions lie at residues 1–23 (MAYT…TSKI) and 51–80 (TGDN…ERRP). The segment covering 52 to 63 (GDNKDTSVDVHH) has biased composition (basic and acidic residues). The span at 64 to 74 (SSAQGGNNQGT) shows a compositional bias: polar residues. The 110-residue stretch at 126–235 (SGTGEIRTPW…EKKVIDVQIN (110 aa)) folds into the sHSP domain.

This sequence belongs to the small heat shock protein (HSP20) family. As to expression, in fruits, flowers, leaves, and stems.

It localises to the plastid. The protein localises to the chloroplast. The protein is Small heat shock protein, chloroplastic (HSP21) of Solanum lycopersicum (Tomato).